The chain runs to 393 residues: S-adenosylmethionine synthase (393 aa).

Residue histidine 16 coordinates ATP. Aspartate 18 provides a ligand contact to Mg(2+). Residue glutamate 44 coordinates K(+). L-methionine is bound by residues glutamate 57 and glutamine 100. A flexible loop region spans residues 100–110 (QSNDIAQGVDH). ATP is bound by residues 167-169 (DAK), 238-239 (RF), aspartate 247, 253-254 (RK), alanine 270, and lysine 274. Aspartate 247 contacts L-methionine. Lysine 278 provides a ligand contact to L-methionine.

It belongs to the AdoMet synthase family. In terms of assembly, homotetramer; dimer of dimers. It depends on Mg(2+) as a cofactor. K(+) is required as a cofactor.

It localises to the cytoplasm. It carries out the reaction L-methionine + ATP + H2O = S-adenosyl-L-methionine + phosphate + diphosphate. It participates in amino-acid biosynthesis; S-adenosyl-L-methionine biosynthesis; S-adenosyl-L-methionine from L-methionine: step 1/1. Functionally, catalyzes the formation of S-adenosylmethionine (AdoMet) from methionine and ATP. The overall synthetic reaction is composed of two sequential steps, AdoMet formation and the subsequent tripolyphosphate hydrolysis which occurs prior to release of AdoMet from the enzyme. In Acidovorax ebreus (strain TPSY) (Diaphorobacter sp. (strain TPSY)), this protein is S-adenosylmethionine synthase.